Reading from the N-terminus, the 1897-residue chain is uncharacterized protein (1897 aa).

Positions 1661-1888 (SDERVKTNIR…AKVISLESRL (228 aa)) constitute a Peptidase S74 domain. Residues 1865–1894 (AALQEIDRQLQLEKAKVISLESRLSALELK) are a coiled coil.

This is an uncharacterized protein from Micromonas pusilla (Picoplanktonic green alga).